The primary structure comprises 340 residues: Glyceraldehyde-3-phosphate dehydrogenase, cytosolic (340 aa).

Residues 16-17, Asp-38, and Arg-85 contribute to the NAD(+) site; that span reads RI. Residues 156–158, Thr-187, 216–217, and Arg-239 each bind D-glyceraldehyde 3-phosphate; these read SCT and TG. Cys-157 functions as the Nucleophile in the catalytic mechanism. Position 321 (Asn-321) interacts with NAD(+).

Belongs to the glyceraldehyde-3-phosphate dehydrogenase family. As to quaternary structure, homotetramer.

Its subcellular location is the cytoplasm. It catalyses the reaction D-glyceraldehyde 3-phosphate + phosphate + NAD(+) = (2R)-3-phospho-glyceroyl phosphate + NADH + H(+). It participates in carbohydrate degradation; glycolysis; pyruvate from D-glyceraldehyde 3-phosphate: step 1/5. Its function is as follows. Key enzyme in glycolysis that catalyzes the first step of the pathway by converting D-glyceraldehyde 3-phosphate (G3P) into 3-phospho-D-glyceroyl phosphate. Essential for the maintenance of cellular ATP levels and carbohydrate metabolism. This Taxus baccata (English yew) protein is Glyceraldehyde-3-phosphate dehydrogenase, cytosolic.